The sequence spans 330 residues: Tetraacyldisaccharide 4'-kinase (330 aa).

An ATP-binding site is contributed by 58-65 (TVGGSGKT).

The protein belongs to the LpxK family.

It catalyses the reaction a lipid A disaccharide + ATP = a lipid IVA + ADP + H(+). It participates in glycolipid biosynthesis; lipid IV(A) biosynthesis; lipid IV(A) from (3R)-3-hydroxytetradecanoyl-[acyl-carrier-protein] and UDP-N-acetyl-alpha-D-glucosamine: step 6/6. Its function is as follows. Transfers the gamma-phosphate of ATP to the 4'-position of a tetraacyldisaccharide 1-phosphate intermediate (termed DS-1-P) to form tetraacyldisaccharide 1,4'-bis-phosphate (lipid IVA). This is Tetraacyldisaccharide 4'-kinase from Shewanella halifaxensis (strain HAW-EB4).